Reading from the N-terminus, the 208-residue chain is Ribosomal RNA large subunit methyltransferase E (208 aa).

S-adenosyl-L-methionine-binding residues include Gly62, Trp64, Asp82, Asp98, and Asp123. The active-site Proton acceptor is the Lys163.

Belongs to the class I-like SAM-binding methyltransferase superfamily. RNA methyltransferase RlmE family.

It is found in the cytoplasm. It catalyses the reaction uridine(2552) in 23S rRNA + S-adenosyl-L-methionine = 2'-O-methyluridine(2552) in 23S rRNA + S-adenosyl-L-homocysteine + H(+). Specifically methylates the uridine in position 2552 of 23S rRNA at the 2'-O position of the ribose in the fully assembled 50S ribosomal subunit. In Haemophilus ducreyi (strain 35000HP / ATCC 700724), this protein is Ribosomal RNA large subunit methyltransferase E.